The following is a 327-amino-acid chain: Aquaporin-1 (327 aa).

The disordered stretch occupies residues 1-34 (MSSNDSNDTDKQHTRLDPTGVDDAYIPPEQPETK). Topologically, residues 1-48 (MSSNDSNDTDKQHTRLDPTGVDDAYIPPEQPETKHHRFKISRDTLRNH) are cytoplasmic. Residues 49–69 (FIAAVGEFCGTFMFLWCAYVI) traverse the membrane as a helical segment. Topologically, residues 70 to 91 (CNVANHDVALVAAPDGSHPGQL) are extracellular. Residues 92-112 (IMIAIGFGFSVMFSIWCFAGV) form a helical membrane-spanning segment. Over 113–136 (SGGALNPAVSLSLCLARAVSPTRC) the chain is Cytoplasmic. The NPA 1 signature appears at 118–120 (NPA). A helical membrane pass occupies residues 137–157 (VVMWVSQIVAGMAAGGAASAM). Topologically, residues 158–176 (TPGEVLFANSLGLGCSRTR) are extracellular. A helical membrane pass occupies residues 177–197 (GLFLEMFGTAILCLTVLMTAV). Residues 198–203 (EKRETN) lie on the Cytoplasmic side of the membrane. The helical transmembrane segment at 204 to 224 (FMAALPIGISLFIAHVALTAY) threads the bilayer. At 225–248 (TGTGVNPARSLGAAVAARYFPHYH) the chain is on the extracellular side. The short motif at 230–232 (NPA) is the NPA 2 element. A helical membrane pass occupies residues 249–269 (WIYWIGPLLGSILAWSVWQLL). Residues 270–327 (QILDYTTYVTAEKAASTKEKAQKKVKPAVPLLWLKSNFPLLFFISRSLALNVIIFGKN) are Cytoplasmic-facing.

The protein belongs to the MIP/aquaporin (TC 1.A.8) family.

The protein localises to the endoplasmic reticulum membrane. Its subcellular location is the cell membrane. Water channel required to facilitate the transport of water across membranes. Involved in sporulation, freeze tolerance and osmotolerance. Is non-functional in most laboratory strains. The protein is Aquaporin-1 (AQY1) of Saccharomyces cerevisiae (Baker's yeast).